The chain runs to 185 residues: Ribosome-recycling factor (185 aa).

It belongs to the RRF family.

It localises to the cytoplasm. Responsible for the release of ribosomes from messenger RNA at the termination of protein biosynthesis. May increase the efficiency of translation by recycling ribosomes from one round of translation to another. In Chromobacterium violaceum (strain ATCC 12472 / DSM 30191 / JCM 1249 / CCUG 213 / NBRC 12614 / NCIMB 9131 / NCTC 9757 / MK), this protein is Ribosome-recycling factor.